A 32-amino-acid chain; its full sequence is Potassium channel toxin alpha-KTx 9.4 (32 aa).

Disulfide bonds link Cys-3–Cys-19, Cys-6–Cys-24, and Cys-10–Cys-26.

Expressed by the venom gland.

It localises to the secreted. Blocker of human voltage-gated potassium channel Kv1.1/KCNA1. The polypeptide is Potassium channel toxin alpha-KTx 9.4 (Hottentotta tamulus (Eastern Indian scorpion)).